The sequence spans 240 residues: Nudix hydrolase 3 (240 aa).

Residues 50–190 form the Nudix hydrolase domain; sequence NSAMSVLIPL…RMKYTLPSFD (141 aa). A Nudix box motif is present at residues 89–110; the sequence is GRMDPGETTTETALRETFEEIG. Glu104 and Glu108 together coordinate Mg(2+).

It belongs to the Nudix hydrolase family. PCD1 subfamily. Mn(2+) serves as cofactor. Requires Mg(2+) as cofactor.

In terms of biological role, probably mediates the hydrolysis of some nucleoside diphosphate derivatives. The protein is Nudix hydrolase 3 (ndx-3) of Caenorhabditis elegans.